A 397-amino-acid polypeptide reads, in one-letter code: Acetate kinase (397 aa).

Asparagine 8 is a Mg(2+) binding site. Lysine 15 provides a ligand contact to ATP. Position 89 (arginine 89) interacts with substrate. Aspartate 146 serves as the catalytic Proton donor/acceptor. Residues 206-210, 281-283, and 329-333 contribute to the ATP site; these read HLGNG, DLR, and GIGEN. Glutamate 382 is a Mg(2+) binding site.

The protein belongs to the acetokinase family. In terms of assembly, homodimer. The cofactor is Mg(2+). It depends on Mn(2+) as a cofactor.

It is found in the cytoplasm. It catalyses the reaction acetate + ATP = acetyl phosphate + ADP. It participates in metabolic intermediate biosynthesis; acetyl-CoA biosynthesis; acetyl-CoA from acetate: step 1/2. Its function is as follows. Catalyzes the formation of acetyl phosphate from acetate and ATP. Can also catalyze the reverse reaction. The protein is Acetate kinase of Bacillus cytotoxicus (strain DSM 22905 / CIP 110041 / 391-98 / NVH 391-98).